Reading from the N-terminus, the 238-residue chain is Mannose-binding protein A (238 aa).

Residues 1–17 form the signal peptide; that stretch reads MLLLPLLVLLCVVSVSS. The span at 38 to 49 shows a compositional bias: basic and acidic residues; that stretch reads DGRDGPKGEKGE. The interval 38-87 is disordered; the sequence is DGRDGPKGEKGEPGQGLRGLQGPPGKLGPPGSVGAPGSQGPKGQKGDRGD. In terms of domain architecture, Collagen-like spans 39–88; it reads GRDGPKGEKGEPGQGLRGLQGPPGKLGPPGSVGAPGSQGPKGQKGDRGDS. 4-hydroxyproline is present on Pro-43. A 5-hydroxylysine mark is found at Lys-44 and Lys-47. Residues Lys-44 and Lys-47 are each glycosylated (O-linked (Gal...) hydroxylysine). 4-hydroxyproline occurs at positions 50, 61, 67, 73, and 78. 5-hydroxylysine is present on residues Lys-79 and Lys-82. Residues Lys-79 and Lys-82 are each glycosylated (O-linked (Gal...) hydroxylysine). Positions 143–238 constitute a C-type lectin domain; that stretch reads ALCSELRGTV…SHTAVCEFPA (96 aa). Cystine bridges form between Cys-145–Cys-234 and Cys-212–Cys-226. Residues Asp-178, Glu-182, Glu-202, Asn-204, Asp-205, Glu-210, Asp-211, Asn-222, and Asp-223 each coordinate Ca(2+). The tract at residues 202-210 is calcium-dependent carbohydrate binding; the sequence is EPNDHGSGE.

In terms of assembly, homotrimer. Forms higher oligomeric complexes formed by the association of two, three or more homotrimers. Oligomerization occurs in the endoplasmic reticulum. Interacts with MASP1 and MASP2. Hydroxylated on lysine and proline residues within the collagen-like domain. In terms of processing, O-glycosylated. O-linked glycans on hydroxylysine residues consist of Glc-Gal disaccharides bound to the oxygen atom of post-translationally added hydroxyl groups. In terms of tissue distribution, detected in blood serum (at protein level).

It localises to the secreted. In terms of biological role, calcium-dependent lectin. Plays a role in the innate immune response by binding mannose, fucose and N-acetylglucosamine moieties on different microorganisms and mediating activation of the lectin complement pathway. Binds to late apoptotic cells, as well as to apoptotic blebs and to necrotic cells, but not to early apoptotic cells, facilitating their uptake by macrophages. In Rattus norvegicus (Rat), this protein is Mannose-binding protein A (Mbl1).